The following is a 565-amino-acid chain: Zinc finger protein 143 (565 aa).

C2H2-type zinc fingers lie at residues 230–254 (FRCD…ERSH), 260–284 (YQCD…VRTH), 290–314 (YRCS…VRTH), 320–344 (FKCP…IRTH), 350–374 (YYCS…VRIH), 380–404 (YVCT…HVVH), and 410–433 (YNCN…RTAH).

This sequence belongs to the GLI C2H2-type zinc-finger protein family.

The protein resides in the nucleus. Transcriptional activator. Activates the gene for selenocysteine tRNA (tRNAsec). Binds to the activator element (AE) motif of the selenocysteine tRNA gene promoter. This chain is Zinc finger protein 143 (znf143), found in Xenopus laevis (African clawed frog).